A 266-amino-acid chain; its full sequence is Regulatory protein RecX (266 aa).

Belongs to the RecX family.

Its subcellular location is the cytoplasm. Functionally, modulates RecA activity. This Enterococcus faecalis (strain ATCC 700802 / V583) protein is Regulatory protein RecX.